Reading from the N-terminus, the 461-residue chain is Porin AaxA (461 aa).

The first 22 residues, 1–22, serve as a signal peptide directing secretion; sequence MSFRSILLTALLSLSFTNTMQA.

It belongs to the OprB family.

It localises to the cell outer membrane. Functionally, facilitates L-arginine uptake, as part of the AaxABC system. The arginine uptake by the bacterium in the macrophage may be a virulence factor against the host innate immune response. The sequence is that of Porin AaxA (aaxA) from Chlamydia muridarum (strain MoPn / Nigg).